The chain runs to 259 residues: Virion protein US10 homolog (259 aa).

A zinc finger lies at 162–174 (CAHWCCLGHAFGC).

This sequence belongs to the herpesviridae US10 family. Phosphorylated.

It is found in the virion tegument. Its subcellular location is the host nucleus matrix. The polypeptide is Virion protein US10 homolog (Equine herpesvirus 4 (strain 1942) (EHV-4)).